The sequence spans 518 residues: Probable protein phosphatase 2C 14 (518 aa).

2 stretches are compositionally biased toward low complexity: residues 1–10 (MVEAAAGRRS) and 86–105 (PQRQ…APGA). Disordered stretches follow at residues 1–31 (MVEA…QQHQ) and 86–108 (PQRQ…ADGR). The region spanning 129–437 (VASLYTLQGK…DDCAVVCLFL (309 aa)) is the PPM-type phosphatase domain. Residues Asp-165 and Gly-166 each coordinate Mn(2+). The disordered stretch occupies residues 192–222 (TDEGRQTSTSSIKSNGDETGSPGNMGRDAEQ). Residues 197–213 (QTSTSSIKSNGDETGSP) show a composition bias toward polar residues. Residues Asp-382 and Asp-428 each contribute to the Mn(2+) site.

The protein belongs to the PP2C family. Requires Mg(2+) as cofactor. It depends on Mn(2+) as a cofactor.

The catalysed reaction is O-phospho-L-seryl-[protein] + H2O = L-seryl-[protein] + phosphate. It catalyses the reaction O-phospho-L-threonyl-[protein] + H2O = L-threonyl-[protein] + phosphate. This chain is Probable protein phosphatase 2C 14, found in Oryza sativa subsp. japonica (Rice).